A 192-amino-acid polypeptide reads, in one-letter code: MTEPVLRGLPSSPRPFGGYFDQVADTLAVAYPRLPDAIERTDVDRGELTFHVRREYLRELALVLRDDERLRFELLNSLSGVHYPTDVGRELHVVYELTSMTYRRHIRLEVAAPDADPHIPSVVDVWPTADFQERETWDMFGVIFDGHPALTRILMPDDWPGHPQRKDYPLGGIPVEYKGATVPPPDERRQYA.

Positions 170 to 192 are disordered; it reads LGGIPVEYKGATVPPPDERRQYA.

Belongs to the complex I 30 kDa subunit family. In terms of assembly, NDH-1 is composed of 14 different subunits. Subunits NuoB, C, D, E, F, and G constitute the peripheral sector of the complex.

It is found in the cell membrane. It carries out the reaction a quinone + NADH + 5 H(+)(in) = a quinol + NAD(+) + 4 H(+)(out). Its function is as follows. NDH-1 shuttles electrons from NADH, via FMN and iron-sulfur (Fe-S) centers, to quinones in the respiratory chain. The immediate electron acceptor for the enzyme in this species is believed to be a menaquinone. Couples the redox reaction to proton translocation (for every two electrons transferred, four hydrogen ions are translocated across the cytoplasmic membrane), and thus conserves the redox energy in a proton gradient. This chain is NADH-quinone oxidoreductase subunit C, found in Acidothermus cellulolyticus (strain ATCC 43068 / DSM 8971 / 11B).